The primary structure comprises 696 residues: Lutropin-choriogonadotropic hormone receptor (696 aa).

A signal peptide spans 1–27 (MRRRSLALRLLLALLLLPPPLPQTLLG). Over 28–358 (APCPEPCSCR…AFNPCEDIMG (331 aa)) the chain is Extracellular. The N-linked (GlcNAc...) asparagine glycan is linked to Asn99. LRR repeat units follow at residues 122–147 (LPRL…IFSS), 149–171 (FNFI…AFQG), 172–196 (MNNE…AFNG), 198–220 (TLIS…AFRG), 221–244 (ARGP…GLES), and 250–271 (ATSS…LLDA). 2 N-linked (GlcNAc...) asparagine glycosylation sites follow: Asn174 and Asn195. 3 N-linked (GlcNAc...) asparagine glycosylation sites follow: Asn291, Asn299, and Asn313. Position 331 is a sulfotyrosine (Tyr331). Residues 359 to 386 (YDFLRVLIWLINILAIMGNVTVLFVLLT) form a helical membrane-spanning segment. Residues 387 to 395 (SHYKLTVPR) lie on the Cytoplasmic side of the membrane. Residues 396–418 (FLMCNLSFADFCMGLYLLLIASV) form a helical membrane-spanning segment. Over 419 to 439 (DAQTKGQYYNHAIDWQTGNGC) the chain is Extracellular. Cys439 and Cys514 are joined by a disulfide. The helical transmembrane segment at 440–462 (SVAGFFTVFASELSVYTLTVITL) threads the bilayer. Over 463–482 (ERWHTITYAIQLDQKLRLRH) the chain is Cytoplasmic. Residues 483-505 (AIPIMLGGWLFSTLIAMLPLVGV) traverse the membrane as a helical segment. Over 506-525 (SSYMKVSICLPMDVETTLSQ) the chain is Extracellular. A helical transmembrane segment spans residues 526–547 (VYILTILILNVVAFIIICACYI). The Cytoplasmic portion of the chain corresponds to 548-570 (KIYFAVQNPELMATNKDTKIAKK). Residues 571 to 594 (MAVLIFTDFTCMAPISFFAISAAL) form a helical membrane-spanning segment. At 595-605 (KVPLITVTNSK) the chain is on the extracellular side. Residues 606–626 (VLLVLFYPVNSCANPFLYAIF) form a helical membrane-spanning segment. Residues 627–696 (TKAFRRDFFL…VMDKTCYKDC (70 aa)) lie on the Cytoplasmic side of the membrane. Residues Cys643 and Cys644 are each lipidated (S-palmitoyl cysteine).

Belongs to the G-protein coupled receptor 1 family. FSH/LSH/TSH subfamily. Sulfated.

It localises to the cell membrane. Its function is as follows. Receptor for lutropin-choriogonadotropic hormone. The activity of this receptor is mediated by G proteins which activate adenylate cyclase. The polypeptide is Lutropin-choriogonadotropic hormone receptor (LHCGR) (Sus scrofa (Pig)).